Consider the following 60-residue polypeptide: Large ribosomal subunit protein uL30 (60 aa).

The protein belongs to the universal ribosomal protein uL30 family. In terms of assembly, part of the 50S ribosomal subunit.

In Idiomarina loihiensis (strain ATCC BAA-735 / DSM 15497 / L2-TR), this protein is Large ribosomal subunit protein uL30.